The following is a 128-amino-acid chain: 3-aminoacrylate deaminase RutC (128 aa).

The protein belongs to the RutC family.

It carries out the reaction (Z)-3-aminoacrylate + H2O + H(+) = 3-oxopropanoate + NH4(+). In terms of biological role, involved in pyrimidine catabolism. Catalyzes the deamination of 3-aminoacrylate to malonic semialdehyde, a reaction that can also occur spontaneously. RutC may facilitate the reaction and modulate the metabolic fitness, rather than catalyzing essential functions. The protein is 3-aminoacrylate deaminase RutC of Enterobacter cloacae subsp. cloacae (strain ATCC 13047 / DSM 30054 / NBRC 13535 / NCTC 10005 / WDCM 00083 / NCDC 279-56).